The following is a 279-amino-acid chain: Estrogen receptor beta (279 aa).

Positions 27–261 (SPEQLVLTLL…DLLLEMLNAH (235 aa)) constitute an NR LBD domain.

Belongs to the nuclear hormone receptor family. NR3 subfamily. In terms of assembly, binds DNA as a homodimer. Can form a heterodimer with ESR1. Interacts with NCOA1, NCOA3, NCOA5 and NCOA6 coactivators, leading to a strong increase of transcription of target genes. Interacts with UBE1C and AKAP13. Interacts with DNTTIP2. Interacts with CCDC62 in the presence of estradiol/E2; this interaction seems to enhance the transcription of target genes. Interacts with DNAAF4. Interacts with PRMT2. Interacts with CCAR2 (via N-terminus) in a ligand-independent manner. Interacts with RBM39, in the presence of estradiol (E2). Interacts with STUB1/CHIP.

The protein resides in the nucleus. Functionally, nuclear hormone receptor. Binds estrogens with an affinity similar to that of ESR1/ER-alpha, and activates expression of reporter genes containing estrogen response elements (ERE) in an estrogen-dependent manner. This Macaca mulatta (Rhesus macaque) protein is Estrogen receptor beta (ESR2).